The primary structure comprises 220 residues: 3-dehydroquinate dehydratase (220 aa).

3-dehydroquinate is bound by residues Ser8, 30–32 (ELR), and Arg63. The active-site Proton donor/acceptor is His114. The active-site Schiff-base intermediate with substrate is Lys140. Positions 174 and 197 each coordinate 3-dehydroquinate.

It belongs to the type-I 3-dehydroquinase family. Homodimer.

It carries out the reaction 3-dehydroquinate = 3-dehydroshikimate + H2O. It participates in metabolic intermediate biosynthesis; chorismate biosynthesis; chorismate from D-erythrose 4-phosphate and phosphoenolpyruvate: step 3/7. Functionally, involved in the third step of the chorismate pathway, which leads to the biosynthesis of aromatic amino acids. Catalyzes the cis-dehydration of 3-dehydroquinate (DHQ) and introduces the first double bond of the aromatic ring to yield 3-dehydroshikimate. The chain is 3-dehydroquinate dehydratase from Saccharolobus solfataricus (strain ATCC 35092 / DSM 1617 / JCM 11322 / P2) (Sulfolobus solfataricus).